Consider the following 377-residue polypeptide: Peroxisomal membrane protein PEX14 (377 aa).

Residues 1–15 (MASSEQAEQPSQPSS) show a composition bias toward low complexity. Positions 1 to 24 (MASSEQAEQPSQPSSTPGSENVLP) are disordered. The residue at position 2 (Ala-2) is an N-acetylalanine. Residues 2–108 (ASSEQAEQPS…YSPAGSRWRD (107 aa)) lie on the Peroxisomal matrix side of the membrane. Residue Lys-34 is modified to N6-acetyllysine. A helical transmembrane segment spans residues 109 to 126 (YGALAIIMAGIAFGFHQL). The Cytoplasmic segment spans residues 127-377 (YKKYLLPLIL…EGASNESERD (251 aa)). Residues 230 to 377 (PPSPSAPKIP…EGASNESERD (148 aa)) are disordered. Position 232 is a phosphoserine (Ser-232). Low complexity-rich tracts occupy residues 244 to 259 (PVKS…VNHH) and 265 to 275 (SPVSNESTSSS). 2 positions are modified to phosphoserine: Ser-282 and Ser-335. The segment covering 323-342 (KEDEEDEEDDDVSHVDEEDC) has biased composition (acidic residues). The span at 360–377 (QVEKLRRPEGASNESERD) shows a compositional bias: basic and acidic residues.

Belongs to the peroxin-14 family. In terms of assembly, interacts with PEX13; forming the PEX13-PEX14 docking complex. Interacts with PEX5 (via WxxxF/Y motifs). Interacts with PEX19. Interacts with tubulin.

The protein resides in the peroxisome membrane. Component of the PEX13-PEX14 docking complex, a translocon channel that specifically mediates the import of peroxisomal cargo proteins bound to PEX5 receptor. The PEX13-PEX14 docking complex forms a large import pore which can be opened to a diameter of about 9 nm. Mechanistically, PEX5 receptor along with cargo proteins associates with the PEX14 subunit of the PEX13-PEX14 docking complex in the cytosol, leading to the insertion of the receptor into the organelle membrane with the concomitant translocation of the cargo into the peroxisome matrix. Plays a key role for peroxisome movement through a direct interaction with tubulin. This Homo sapiens (Human) protein is Peroxisomal membrane protein PEX14.